We begin with the raw amino-acid sequence, 271 residues long: L-aspartate dehydrogenase (271 aa).

Alanine 124 and asparagine 192 together coordinate NAD(+). Histidine 222 is a catalytic residue.

This sequence belongs to the L-aspartate dehydrogenase family.

It catalyses the reaction L-aspartate + NADP(+) + H2O = oxaloacetate + NH4(+) + NADPH + H(+). The enzyme catalyses L-aspartate + NAD(+) + H2O = oxaloacetate + NH4(+) + NADH + H(+). It participates in cofactor biosynthesis; NAD(+) biosynthesis; iminoaspartate from L-aspartate (dehydrogenase route): step 1/1. Functionally, specifically catalyzes the NAD or NADP-dependent dehydrogenation of L-aspartate to iminoaspartate. This is L-aspartate dehydrogenase from Methanococcoides burtonii (strain DSM 6242 / NBRC 107633 / OCM 468 / ACE-M).